We begin with the raw amino-acid sequence, 117 residues long: Ribosome-binding factor A (117 aa).

It belongs to the RbfA family. As to quaternary structure, monomer. Binds 30S ribosomal subunits, but not 50S ribosomal subunits or 70S ribosomes.

Its subcellular location is the cytoplasm. One of several proteins that assist in the late maturation steps of the functional core of the 30S ribosomal subunit. Associates with free 30S ribosomal subunits (but not with 30S subunits that are part of 70S ribosomes or polysomes). Required for efficient processing of 16S rRNA. May interact with the 5'-terminal helix region of 16S rRNA. The sequence is that of Ribosome-binding factor A from Petrotoga mobilis (strain DSM 10674 / SJ95).